We begin with the raw amino-acid sequence, 125 residues long: Small ribosomal subunit protein uS13 (125 aa).

A disordered region spans residues 92–125 (RHRRGLPVRGQRTRTNARTRKGKKKTVGAQAKKK).

The protein belongs to the universal ribosomal protein uS13 family. As to quaternary structure, part of the 30S ribosomal subunit. Forms a loose heterodimer with protein S19. Forms two bridges to the 50S subunit in the 70S ribosome.

In terms of biological role, located at the top of the head of the 30S subunit, it contacts several helices of the 16S rRNA. In the 70S ribosome it contacts the 23S rRNA (bridge B1a) and protein L5 of the 50S subunit (bridge B1b), connecting the 2 subunits; these bridges are implicated in subunit movement. Contacts the tRNAs in the A and P-sites. The sequence is that of Small ribosomal subunit protein uS13 from Akkermansia muciniphila (strain ATCC BAA-835 / DSM 22959 / JCM 33894 / BCRC 81048 / CCUG 64013 / CIP 107961 / Muc).